Consider the following 505-residue polypeptide: MTDKHNKKYVVALDQGTTSSRAIVFDRDANVVSQAQREFAQFYPQAGWVEHDPMEIWATQSSTLVEALAQASIEHDQVAAIGITNQRETTVVWDRHSGRPIHNAIVWQCRRSAAICAQLKRDGLEDYIRETTGLVTDPYFSGTKLKWILDNVEGARERARNGDLLFGTIDTWLIWKLTEGKVHVTDYTNASRTMLFNIHSRDWDARMLEVLDIPRSMLPEVRNSSEVYGNARIGGVGGGELPIAGIAGDQQAALFGQMCVEPGQAKNTYGTGCFLLMHTGDKAVKSTHGLLTTIACGPRGEVGYALEGAVFNGGSTVQWLRDELKVINDSFDSEYFATKVKDSNGVYLVPAFTGLGAPYWDPYARGAVFGLTRGVKADHLIRATLESIAYQTRDVLDAMQRDAGERLRALRVDGGAVANNFLMQFQADILGTRVERPVMRETTALGAAYLAGLACGFWSSLDELKSKAVIERVFEPECDEPRREKLYAGWKKAVERTRGWDDGEL.

Thr17 contributes to the ADP binding site. Thr17, Thr18, and Ser19 together coordinate ATP. Thr17 contributes to the sn-glycerol 3-phosphate binding site. Arg21 contacts ADP. 4 residues coordinate sn-glycerol 3-phosphate: Arg87, Glu88, Tyr139, and Asp249. Glycerol-binding residues include Arg87, Glu88, Tyr139, Asp249, and Gln250. ADP contacts are provided by Thr271 and Gly314. ATP is bound by residues Thr271, Gly314, Gln318, and Gly415. ADP contacts are provided by Gly415 and Asn419.

Belongs to the FGGY kinase family.

It catalyses the reaction glycerol + ATP = sn-glycerol 3-phosphate + ADP + H(+). The protein operates within polyol metabolism; glycerol degradation via glycerol kinase pathway; sn-glycerol 3-phosphate from glycerol: step 1/1. Inhibited by fructose 1,6-bisphosphate (FBP). Key enzyme in the regulation of glycerol uptake and metabolism. Catalyzes the phosphorylation of glycerol to yield sn-glycerol 3-phosphate. The protein is Glycerol kinase 2 of Pseudomonas aeruginosa (strain ATCC 15692 / DSM 22644 / CIP 104116 / JCM 14847 / LMG 12228 / 1C / PRS 101 / PAO1).